A 960-amino-acid polypeptide reads, in one-letter code: Dynamin-like GTPase OPA1, mitochondrial (960 aa).

A mitochondrion-targeting transit peptide spans 1-87 (MWRAGRAALA…TKYGYQPRRN (87 aa)). The Mitochondrial matrix portion of the chain corresponds to 88-96 (FWPARLAAR). A helical membrane pass occupies residues 97-113 (LLKLRYIILGSAVGGGY). Over 114 to 770 (TAKKTFDEWK…NAIENMIGPD (657 aa)) the chain is Mitochondrial intermembrane. Residues 210–254 (SDKEKIDQLQEELLHTQLKYQRILERLEKENKELRKLVLQKDDKG) are a coiled coil. Residues 217-222 (QLQEEL) carry the LQQQIQ motif motif. K228 is modified (N6-acetyllysine). The LQQQIQ motif motif lies at 234–239 (ERLEKE). A Dynamin-type G domain is found at 285–561 (QDHLPRVVVV…FWKMVRESVE (277 aa)). The segment at 295-302 (GDQSAGKT) is G1 motif. Positions 298, 300, 301, 302, 303, and 317 each coordinate GTP. T302 serves as a coordination point for Mg(2+). Residues 321-324 (MMTR) are G2 motif. 2 residues coordinate Mg(2+): T323 and D398. The G3 motif stretch occupies residues 398-401 (DLPG). The tract at residues 467–470 (TKVD) is G4 motif. GTP-binding residues include K468, D470, and T503. Residues 501 to 504 (VVTG) are G5 motif. Stalk region regions lie at residues 589-836 (DRNE…IKDT) and 874-928 (CNDV…VKLL). The segment at 736 to 856 (SDKQQWDAAI…KTALNHCNLC (121 aa)) is paddle region. Residues 771–781 (WKKRWIYWKNR) lie within the membrane without spanning it. The Mitochondrial intermembrane portion of the chain corresponds to 782–960 (TQEQCVHNET…AFIEALHQEK (179 aa)). A disulfide bond links C856 and C874. The stretch at 895-960 (RQQLTNTEVR…AFIEALHQEK (66 aa)) forms a coiled coil.

Belongs to the TRAFAC class dynamin-like GTPase superfamily. Dynamin/Fzo/YdjA family. As to quaternary structure, oligomeric complex consisting of membrane-bound and soluble forms of OPA1. Interacts with RCC1L; RCC1L acts as a guanine nucleotide exchange factor (GEF) for OPA1 by exchanging bound GDP for free GTP. Interacts with CHCHD3 and IMMT; these interactions occur preferentially with soluble OPA1 forms. Interacts with PRELID1. Post-translationally, cleaved by OMA1 or YME1L downstream of the transmembrane region in response to different signals to generate soluble forms. Cleaved by OMA1 at position S1 following stress conditions, generating the short soluble form (Dynamin-like GTPase OPA1, short form; S-OPA1). AFG3L2 is involved in the regulation of OMA1-dependent processing of OPA1. PARL-dependent proteolytic processing releases an antiapoptotic soluble form not required for mitochondrial fusion. In terms of processing, cleavage at position S2 by YME1L is required to mediate oxidative phosphorylation (OXPHOS)-induced mitochondrial fusion. Cleavage occurs in the sequence motif Leu-Gln-Gln-Gln-Ile-Gln (LQQQIQ). In terms of tissue distribution, expressed in brain as well as retinal ganglion, starbust amacrine and horizontal cells of the retina. Absent from nerve fibers and photoreceptor cells of the retina.

The protein localises to the mitochondrion inner membrane. It is found in the mitochondrion intermembrane space. It catalyses the reaction GTP + H2O = GDP + phosphate + H(+). Its activity is regulated as follows. Activated by guanine nucleotide exchange factor RCC1L. Its function is as follows. Dynamin-related GTPase that is essential for normal mitochondrial morphology by mediating fusion of the mitochondrial inner membranes, regulating cristae morphology and maintaining respiratory chain function. Exists in two forms: the transmembrane, long form (Dynamin-like GTPase OPA1, long form; L-OPA1), which is tethered to the inner mitochondrial membrane, and the short soluble form (Dynamin-like GTPase OPA1, short form; S-OPA1), which results from proteolytic cleavage and localizes in the intermembrane space. Both forms (L-OPA1 and S-OPA1) cooperate to catalyze the fusion of the mitochondrial inner membrane. The equilibrium between L-OPA1 and S-OPA1 is essential: excess levels of S-OPA1, produced by cleavage by OMA1 following loss of mitochondrial membrane potential, lead to an impaired equilibrium between L-OPA1 and S-OPA1, inhibiting mitochondrial fusion. The balance between L-OPA1 and S-OPA1 also influences cristae shape and morphology. Involved in remodeling cristae and the release of cytochrome c during apoptosis. Proteolytic processing by PARL in response to intrinsic apoptotic signals may lead to disassembly of OPA1 oligomers and release of the caspase activator cytochrome C (CYCS) into the mitochondrial intermembrane space. Acts as a regulator of T-helper Th17 cells, which are characterized by cells with fused mitochondria with tight cristae, by mediating mitochondrial membrane remodeling: OPA1 is required for interleukin-17 (IL-17) production. Its role in mitochondrial morphology is required for mitochondrial genome maintenance. Constitutes the transmembrane long form (L-OPA1) that plays a central role in mitochondrial inner membrane fusion and cristae morphology. L-OPA1 and the soluble short form (S-OPA1) form higher-order helical assemblies that coordinate the fusion of mitochondrial inner membranes. Inner membrane-anchored L-OPA1 molecules initiate membrane remodeling by recruiting soluble S-OPA1 to rapidly polymerize into a flexible cylindrical scaffold encaging the mitochondrial inner membrane. Once at the membrane surface, the formation of S-OPA1 helices induce bilayer curvature. OPA1 dimerization through the paddle region, which inserts into cardiolipin-containing membrane, promotes GTP hydrolysis and the helical assembly of a flexible OPA1 lattice on the membrane, which drives membrane curvature and mitochondrial fusion. Plays a role in the maintenance and remodeling of mitochondrial cristae, some invaginations of the mitochondrial inner membrane that provide an increase in the surface area. Probably acts by forming helical filaments at the inside of inner membrane tubes with the shape and dimensions of crista junctions. The equilibrium between L-OPA1 and S-OPA1 influences cristae shape and morphology: increased L-OPA1 levels promote cristae stacking and elongated mitochondria, while increased S-OPA1 levels correlated with irregular cristae packing and round mitochondria shape. Functionally, constitutes the soluble short form (S-OPA1) generated by cleavage by OMA1, which plays a central role in mitochondrial inner membrane fusion and cristae morphology. The transmembrane long form (L-OPA1) and the S-OPA1 form higher-order helical assemblies that coordinate the fusion of mitochondrial inner membranes. Inner membrane-anchored L-OPA1 molecules initiate membrane remodeling by recruiting soluble S-OPA1 to rapidly polymerize into a flexible cylindrical scaffold encaging the mitochondrial inner membrane. Once at the membrane surface, the formation of S-OPA1 helices induce bilayer curvature. OPA1 dimerization through the paddle region, which inserts into cardiolipin-containing membrane, promotes GTP hydrolysis and the helical assembly of a flexible OPA1 lattice on the membrane, which drives membrane curvature and mitochondrial fusion. Excess levels of S-OPA1 produced by cleavage by OMA1 following stress conditions that induce loss of mitochondrial membrane potential, lead to an impaired equilibrium between L-OPA1 and S-OPA1, thereby inhibiting mitochondrial fusion. Involved in mitochondrial safeguard in response to transient mitochondrial membrane depolarization by mediating flickering: cleavage by OMA1 leads to excess production of S-OPA1, preventing mitochondrial hyperfusion. Plays a role in the maintenance and remodeling of mitochondrial cristae, some invaginations of the mitochondrial inner membrane that provide an increase in the surface area. Probably acts by forming helical filaments at the inside of inner membrane tubes with the shape and dimensions of crista junctions. The equilibrium between L-OPA1 and S-OPA1 influences cristae shape and morphology: increased L-OPA1 levels promote cristae stacking and elongated mitochondria, while increased S-OPA1 levels correlated with irregular cristae packing and round mitochondria shape. In terms of biological role, isoforms that contain the alternative exon 4b are required for mitochondrial genome maintenance, possibly by anchoring the mitochondrial nucleoids to the inner mitochondrial membrane. This chain is Dynamin-like GTPase OPA1, mitochondrial, found in Rattus norvegicus (Rat).